Consider the following 298-residue polypeptide: UDP-N-acetylenolpyruvoylglucosamine reductase (298 aa).

In terms of domain architecture, FAD-binding PCMH-type spans 26-191 (KTGGEAEYLA…LSATFSLTPG (166 aa)). Arginine 170 is an active-site residue. Catalysis depends on serine 220, which acts as the Proton donor. Glutamate 290 is a catalytic residue.

Belongs to the MurB family. FAD serves as cofactor.

Its subcellular location is the cytoplasm. The catalysed reaction is UDP-N-acetyl-alpha-D-muramate + NADP(+) = UDP-N-acetyl-3-O-(1-carboxyvinyl)-alpha-D-glucosamine + NADPH + H(+). It participates in cell wall biogenesis; peptidoglycan biosynthesis. Cell wall formation. In Lactobacillus helveticus (strain DPC 4571), this protein is UDP-N-acetylenolpyruvoylglucosamine reductase.